A 163-amino-acid chain; its full sequence is Glutathione peroxidase-like peroxiredoxin HYR1 (163 aa).

Residue Cys36 is the Cysteine sulfenic acid (-SOH) intermediate of the active site. Residues Cys36 and Cys82 are joined by a disulfide bond.

This sequence belongs to the glutathione peroxidase family. Interacts with YAP1 and probably YBP1.

The protein resides in the cytoplasm. It localises to the mitochondrion intermembrane space. It is found in the peroxisome matrix. The catalysed reaction is a hydroperoxide + [thioredoxin]-dithiol = an alcohol + [thioredoxin]-disulfide + H2O. In terms of biological role, involved in oxidative stress response and redox homeostasis. Functions as a sensor and transducer of hydroperoxide stress. In response to hydroperoxide stress it oxidizes (activates) the transcription activator YAP1, which is involved in transcription activation of genes of the oxidative stress response pathway. May also play a direct role in hydroperoxide scavenging, being the most active of three closely related S.cerevisiae peroxiredoxins (GPX1, GPX2, and HYR1/GPX3) with respect to peroxide and lipid hydroperoxide reduction. The three enzymes are not required for the glutaredoxin-mediated antioxidant function. In the presence of peroxides, HYR1/GPX3 is directly oxidized at Cys-36 to form a cysteine sulfenic acid (-SOH). Cys-36-SOH then forms either an intramolecular disulfide bond (Cys-36 with Cys-82) or a transient, intermolecular disulfide bond with 'Cys-598' of YAP1, which is further resolved into a YAP1 intramolecular disulfide bond ('Cys-303' with 'Cys-598'), which causes its nuclear accumulation and activation, and a reduced Cys-36 in HYR1/GPX3. The chain is Glutathione peroxidase-like peroxiredoxin HYR1 from Saccharomyces cerevisiae (strain ATCC 204508 / S288c) (Baker's yeast).